The chain runs to 491 residues: Probable CtpA-like serine protease (491 aa).

The disordered stretch occupies residues Met1–Lys22. Positions His8 to Lys22 are enriched in polar residues. Residues Leu31–Val51 form a helical membrane-spanning segment. Positions Thr119–Gly201 constitute a PDZ domain. Residues Ser324, Asp335, and Lys349 each act as charge relay system in the active site.

It belongs to the peptidase S41A family.

It is found in the cell membrane. The sequence is that of Probable CtpA-like serine protease from Staphylococcus epidermidis (strain ATCC 35984 / DSM 28319 / BCRC 17069 / CCUG 31568 / BM 3577 / RP62A).